We begin with the raw amino-acid sequence, 420 residues long: Pyridinium-3,5-bisthiocarboxylic acid mononucleotide nickel insertion protein (420 aa).

Residues 81-104 (NHEHKHNHHEIKNDEPAHSHEHHH) are disordered. Over residues 90–99 (EIKNDEPAHS) the composition is skewed to basic and acidic residues.

This sequence belongs to the LarC family.

It carries out the reaction Ni(II)-pyridinium-3,5-bisthiocarboxylate mononucleotide = pyridinium-3,5-bisthiocarboxylate mononucleotide + Ni(2+). Functionally, involved in the biosynthesis of a nickel-pincer cofactor ((SCS)Ni(II) pincer complex). Binds Ni(2+), and functions in nickel delivery to pyridinium-3,5-bisthiocarboxylic acid mononucleotide (P2TMN), to form the mature cofactor. Is thus probably required for the activation of nickel-pincer cofactor-dependent enzymes. The sequence is that of Pyridinium-3,5-bisthiocarboxylic acid mononucleotide nickel insertion protein from Clostridium acetobutylicum (strain ATCC 824 / DSM 792 / JCM 1419 / IAM 19013 / LMG 5710 / NBRC 13948 / NRRL B-527 / VKM B-1787 / 2291 / W).